The chain runs to 433 residues: MSETAEKAIEIWKIRRLVKQLINCHGNGTSMITLIIPPGEQISRYSNMLAEEYGTASNIKSRVNRLSVLSAITSTRERLKLYNKVPDNGLVIYCGEVIMEGNKTRKLNIDFEPFKPINTSQYLCDNKFHTEALAELLESDQRFGFIVMDGHQTLYGVVSGSAREVLQRFTVDLPKKHGRGGQSALRFARLRDEKRHNYVRKVAEGAVQHFITDDKPNVAGIVLAGSADFKTELGQSDLFDQRLQSRIIKTVDVSYGGDAGFNQAIELAADTLSNVKYVQEKKLIQRFFDEISLDSGKYCFGVVDTMNALQEGAVETLLCFADLDMIRYEFKNSEGNPVITYMTKEQEEKDSTNSFLLDKDTGAEMELVSSMLLSEWLAEHYKDYGANLEFVSDRSQEGMQFVKGFGGIGAVMRYQLDLSMLDPESDEFYSDSD.

Q182 carries the post-translational modification N5-methylglutamine. Position 425 is a phosphoserine (S425).

Belongs to the eukaryotic release factor 1 family. As to quaternary structure, component of the eRF1-eRF3-GTP ternary complex, composed of sup45/eRF1, sup35/eRF3 and GTP.

It is found in the cytoplasm. Its function is as follows. Component of the eRF1-eRF3-GTP ternary complex, a ternary complex that mediates translation termination in response to the termination codons. The eRF1-eRF3-GTP complex binds to a stop codon in the ribosomal A-site. Sup45/eRF1 is responsible for stop codon recognition and inducing hydrolysis of peptidyl-tRNA. Following GTP hydrolysis by sup35/eRF3, sup35/eRF3 dissociates, permitting sup45/eRF1 to accommodate fully in the A-site. This is Eukaryotic peptide chain release factor subunit 1 (sup45) from Schizosaccharomyces pombe (strain 972 / ATCC 24843) (Fission yeast).